The sequence spans 20 residues: Agglutinin beta-2 chain isoform 1 (20 aa).

The span at 1-10 shows a compositional bias: polar residues; that stretch reads TQSTGTSQTI. A disordered region spans residues 1-20; that stretch reads TQSTGTSQTIAVGLWGGPDN.

Belongs to the jacalin lectin family. Tetramer of four alpha chains associated with two or four beta chains.

Alpha-methyl-D-mannoside and D-mannose specific lectin. Binds IgA. The chain is Agglutinin beta-2 chain isoform 1 from Morus nigra (Black mulberry).